Consider the following 1620-residue polypeptide: ABC-type organic anion transporter ABCA8B (1620 aa).

A run of 7 helical transmembrane segments spans residues 30-50, 223-243, 267-287, 298-318, 326-346, 352-372, and 396-416; these read SLME…YPHG, FFIF…SINV, SWGL…ALVI, FMVV…LAFL, SVLT…LGFT, LPAP…TLGM, and LIIA…ALMM. Residues 479-714 form the ABC transporter 1 domain; the sequence is IRIRNISKEY…WGVGYHLSLQ (236 aa). 515–522 provides a ligand contact to ATP; that stretch reads GHSGAGKS. N723 is a glycosylation site (N-linked (GlcNAc...) asparagine). 8 consecutive transmembrane segments (helical) span residues 860-880, 979-999, 1023-1043, 1069-1089, 1105-1125, 1135-1155, 1164-1184, and 1194-1214; these read TLLS…FENI, CFPV…KPSA, TAFW…SSVT, MVDI…DYLF, IPCS…ISFI, IWSL…LLAF, IIFL…LHLF, and VIEP…FIFT. The region spanning 1283–1516 is the ABC transporter 2 domain; the sequence is LRKEYAGKQK…FGKDYLLEMK (234 aa). Residue 1321-1328 coordinates ATP; sequence GHNGAGKS.

It belongs to the ABC transporter superfamily. ABCA family. Expressed in heart, brain, lung, liver and skeletal muscle. Highly expressed in the liver, and is also abundant in heart and skeletal muscle. Highly expressed in liver.

It is found in the cell membrane. The protein resides in the basolateral cell membrane. The catalysed reaction is taurocholate(in) + ATP + H2O = taurocholate(out) + ADP + phosphate + H(+). It catalyses the reaction cholesterol(in) + ATP + H2O = cholesterol(out) + ADP + phosphate + H(+). Its activity is regulated as follows. Cholesterol efflux is increased by extracellularly applied taurocholate. Functionally, mediates cholesterol and taurocholate efflux. Through the interaction with ABCA1 potentiates the cholesterol efflux to lipid-free APOA1, in turn regulates high-density lipoprotein cholesterol levels. This chain is ABC-type organic anion transporter ABCA8B, found in Mus musculus (Mouse).